Here is a 274-residue protein sequence, read N- to C-terminus: uncharacterized protein (274 aa).

The first 30 residues, 1–30 (MTIDTPAREDQTLAATHRAMWALGDYALMA), serve as a signal peptide directing secretion.

To M.tuberculosis Rv1403c.

This is an uncharacterized protein from Mycobacterium bovis (strain ATCC BAA-935 / AF2122/97).